A 62-amino-acid polypeptide reads, in one-letter code: Conotoxin Sr5.7 (62 aa).

An N-terminal signal peptide occupies residues 1-22 (MRCLPVFVILLLLIASAPSVDA). A propeptide spanning residues 23–44 (QLKTKDDVPLASFHDNAKGTQH) is cleaved from the precursor.

This sequence belongs to the conotoxin T superfamily. Post-translationally, contains 2 disulfide bonds that can be either 'C1-C3, C2-C4' or 'C1-C4, C2-C3', since these disulfide connectivities have been observed for conotoxins with cysteine framework V (for examples, see AC P0DQQ7 and AC P81755). In terms of tissue distribution, expressed by the venom duct.

The protein localises to the secreted. This chain is Conotoxin Sr5.7, found in Conus spurius (Alphabet cone).